The sequence spans 72 residues: Translation initiation factor IF-1 (72 aa).

Positions 1–72 (MSKSDIIEMQ…TRGRITWRAK (72 aa)) constitute an S1-like domain.

The protein belongs to the IF-1 family. In terms of assembly, component of the 30S ribosomal translation pre-initiation complex which assembles on the 30S ribosome in the order IF-2 and IF-3, IF-1 and N-formylmethionyl-tRNA(fMet); mRNA recruitment can occur at any time during PIC assembly.

The protein localises to the cytoplasm. One of the essential components for the initiation of protein synthesis. Stabilizes the binding of IF-2 and IF-3 on the 30S subunit to which N-formylmethionyl-tRNA(fMet) subsequently binds. Helps modulate mRNA selection, yielding the 30S pre-initiation complex (PIC). Upon addition of the 50S ribosomal subunit IF-1, IF-2 and IF-3 are released leaving the mature 70S translation initiation complex. The chain is Translation initiation factor IF-1 from Clostridium perfringens (strain 13 / Type A).